A 205-amino-acid chain; its full sequence is uncharacterized protein (205 aa).

In terms of domain architecture, Nudix hydrolase spans 51–189 (ANVDAVAILA…KKGFAIDVRL (139 aa)). Residues 90 to 111 (GLVDSKESCEDAAIRELREETG) carry the Nudix box motif.

This sequence belongs to the Nudix hydrolase family.

Its subcellular location is the cytoplasm. The protein localises to the nucleus. This is an uncharacterized protein from Schizosaccharomyces pombe (strain 972 / ATCC 24843) (Fission yeast).